The primary structure comprises 189 residues: UPF0301 protein A1E_00140 (189 aa).

It belongs to the UPF0301 (AlgH) family.

This Rickettsia canadensis (strain McKiel) protein is UPF0301 protein A1E_00140.